Consider the following 208-residue polypeptide: Small ribosomal subunit protein uS4 (208 aa).

Positions Gly98–Lys158 constitute an S4 RNA-binding domain.

Belongs to the universal ribosomal protein uS4 family. Part of the 30S ribosomal subunit. Contacts protein S5. The interaction surface between S4 and S5 is involved in control of translational fidelity.

Its function is as follows. One of the primary rRNA binding proteins, it binds directly to 16S rRNA where it nucleates assembly of the body of the 30S subunit. With S5 and S12 plays an important role in translational accuracy. In Actinobacillus pleuropneumoniae serotype 5b (strain L20), this protein is Small ribosomal subunit protein uS4.